The chain runs to 638 residues: Autolysin (638 aa).

The first 28 residues, M1 to A28, serve as a signal peptide directing secretion. A propeptide spans Q29–K183 (activation peptide). An N-linked (GlcNAc...) asparagine glycan is attached at N30. Residues P95–A102 carry the Cysteine switch motif. C97 serves as a coordination point for Zn(2+). N126 carries an N-linked (GlcNAc...) asparagine glycan. The disordered stretch occupies residues V269–L292. Positions T270 to R284 are enriched in pro residues. An N-linked (GlcNAc...) asparagine glycan is attached at N296. Zn(2+) is bound at residue H396. The active site involves E397. 2 residues coordinate Zn(2+): H400 and H406. N-linked (GlcNAc...) asparagine glycosylation is found at N458, N465, N470, and N523.

This sequence belongs to the peptidase M11 family. Requires Zn(2+) as cofactor. Present in 2 forms: an inactive V-form in vegetative cells and an active and soluble G-form. The V-form enzyme may be converted to the G-form enzyme during gametic differentiation under nitrogen-starved conditions.

It is found in the periplasm. It localises to the secreted. Its subcellular location is the cell wall. The enzyme catalyses Cleavage of the proline- and hydroxyproline-rich proteins of the Chlamydomonas cell wall. Also cleaves azocasein, gelatin and Leu-Trp-Met-|-Arg-Phe-Ala.. In terms of biological role, mediates digestion of the cell walls of the 2 mating type gametes during mating as a necessary prelude to cell fusion. This enzyme acts specifically on the framework proteins (inner wall) of the cell wall, cleaving several model peptides at specific sites. The polypeptide is Autolysin (Chlamydomonas reinhardtii (Chlamydomonas smithii)).